The primary structure comprises 497 residues: Guanosine-5'-triphosphate,3'-diphosphate pyrophosphatase (497 aa).

Belongs to the GppA/Ppx family. GppA subfamily.

It catalyses the reaction guanosine 3'-diphosphate 5'-triphosphate + H2O = guanosine 3',5'-bis(diphosphate) + phosphate + H(+). It participates in purine metabolism; ppGpp biosynthesis; ppGpp from GTP: step 2/2. Functionally, catalyzes the conversion of pppGpp to ppGpp. Guanosine pentaphosphate (pppGpp) is a cytoplasmic signaling molecule which together with ppGpp controls the 'stringent response', an adaptive process that allows bacteria to respond to amino acid starvation, resulting in the coordinated regulation of numerous cellular activities. This Vibrio atlanticus (strain LGP32) (Vibrio splendidus (strain Mel32)) protein is Guanosine-5'-triphosphate,3'-diphosphate pyrophosphatase.